An 835-amino-acid chain; its full sequence is Protein translocase subunit SecA (835 aa).

Residues glutamine 85, 103 to 107 (GEGKT), and aspartate 492 contribute to the ATP site. Positions 788–807 (VQGEAVHPSSDGEEAKKKPV) are disordered. Residues cysteine 819, cysteine 821, cysteine 830, and cysteine 831 each contribute to the Zn(2+) site.

The protein belongs to the SecA family. Monomer and homodimer. Part of the essential Sec protein translocation apparatus which comprises SecA, SecYEG and auxiliary proteins SecDF. Other proteins may also be involved. The cofactor is Zn(2+).

It is found in the cell membrane. The protein localises to the cytoplasm. It catalyses the reaction ATP + H2O + cellular proteinSide 1 = ADP + phosphate + cellular proteinSide 2.. Part of the Sec protein translocase complex. Interacts with the SecYEG preprotein conducting channel. Has a central role in coupling the hydrolysis of ATP to the transfer of proteins into and across the cell membrane, serving as an ATP-driven molecular motor driving the stepwise translocation of polypeptide chains across the membrane. In Bacillus cereus (strain G9842), this protein is Protein translocase subunit SecA.